A 1061-amino-acid polypeptide reads, in one-letter code: MEPAAPDLQPVPEVTKGVPVPTPDSGCCRAAVTTVVAISVASLTLGVLSAFLSAQGVQVEHTAQLHGVRFTSLLQQENSDFYRLLTPALQTLLHFLLRALQPLSLDQEADILQKGIQARLQGQGLSLAAYGTITSVELTGRCEGPVTERDLKSGHCPGNAFSCQNSQCVSKENPECDDRVDCSDGSDEAQCDCGWQPAWRSAGRIVGGAEAAPGEFPWQVSLRENHEHFCGATIIGARWLVSAAHCFNEFQDPAQWAAQAGSVHLSGSEASAVRARVLRIAKHPAYNADTADFDVAVLELARPLPFGRYVQPACLPAATHVFPPRKKCLISGWGYLKEDFLVKPEVLQKATVELLDQNLCSSLYGHSLTDRMVCAGYLDGKVDSCQGDSGGPLVCEEPSGRFFLAGVVSWGIGCAEARRPGVYTRVTRLRDWILEVTSSADTPVVPTEAPAPITPSTPWPTSPESRVPNTTAKPTVAPTPAPLHPSTAAKPQECGARPAMDKPTRIVGGISAVSGEVPWQASLKEGSRHFCGATVVGDRWLLSAAHCFNHTKLEQVQAHLGTVSLLGVGGSPVKLGLRSVALHPRYNPGILDFDVALLELAQPLVFNKYIQPVCLPLAIHKFPVGRKCMISGWGNMQEGNATKPDILQKASVGIIEQKMCGALYNFSLTDRMLCAGFLEGRVDSCQGDSGGPLACEETPGVFYLAGIVSWGIGCAQAKKPGVYARITRLKDWILKAMSSDPSSTAHPHTSSTRLIPSQPPTTTAAGLIPEASTGRPATLRATIRVTTRPLNTTLSARSTTTRRQTPAPGTTVFSHLPDCGLAPPGALTRIVGGSAASLGEWPWQVSLWLRRREHRCGAVLVAERWLLSAAHCFDVYGDPMQWAAFLGTPFLSSTEGQLERVARIYRHPFYNIYTLDYDVALLELAGPVRRSRLVRPICLPGPTRPPEGARCVITGWGSLREGGSMARQLQKAAVRVLSEQTCRRFYPVQISSRMLCAGFPQGGVDSCSGDAGGPLACREPSGQWVLTGVTSWGYGCGRPHFPGVYTRVAAVLGWIGQNIRE.

Residues 3 to 31 (PAAPDLQPVPEVTKGVPVPTPDSGCCRAA) lie on the Cytoplasmic side of the membrane. The helical transmembrane segment at 32–52 (VTTVVAISVASLTLGVLSAFL) threads the bilayer. Residues 53 to 1061 (SAQGVQVEHT…LGWIGQNIRE (1009 aa)) lie on the Extracellular side of the membrane. The LDL-receptor class A domain occupies 155-192 (HCPGNAFSCQNSQCVSKENPECDDRVDCSDGSDEAQCD). Disulfide bonds link C156–C168, C163–C182, C176–C191, and C230–C246. One can recognise a Peptidase S1 1 domain in the interval 205 to 438 (IVGGAEAAPG…LRDWILEVTS (234 aa)). Active-site charge relay system residues include H245 and D294. Cystine bridges form between C328–C395, C360–C374, and C385–C414. S389 functions as the Charge relay system in the catalytic mechanism. The tract at residues 443-499 (PVVPTEAPAPITPSTPWPTSPESRVPNTTAKPTVAPTPAPLHPSTAAKPQECGARPA) is disordered. Pro residues predominate over residues 452 to 461 (PITPSTPWPT). The segment covering 462 to 476 (SPESRVPNTTAKPTV) has biased composition (low complexity). A glycan (N-linked (GlcNAc...) asparagine) is linked at N469. The region spanning 506–738 (IVGGISAVSG…LKDWILKAMS (233 aa)) is the Peptidase S1 2 domain. A disulfide bridge connects residues C531 and C547. H546 functions as the Charge relay system in the catalytic mechanism. A glycan (N-linked (GlcNAc...) asparagine) is linked at N549. D594 serves as the catalytic Charge relay system. 3 disulfide bridges follow: C628-C695, C660-C674, and C685-C714. N640 and N665 each carry an N-linked (GlcNAc...) asparagine glycan. The active-site Charge relay system is the S689. The span at 740–752 (DPSSTAHPHTSST) shows a compositional bias: low complexity. 2 disordered regions span residues 740–771 (DPSSTAHPHTSSTRLIPSQPPTTTAAGLIPEA) and 790–810 (LNTTLSARSTTTRRQTPAPGT). N791 is a glycosylation site (N-linked (GlcNAc...) asparagine). Residues 792 to 808 (TTLSARSTTTRRQTPAP) are compositionally biased toward low complexity. The region spanning 830–1060 (IVGGSAASLG…VLGWIGQNIR (231 aa)) is the Peptidase S1 3 domain. Cystine bridges form between C856–C872, C951–C1017, C982–C996, and C1007–C1036.

It belongs to the peptidase S1 family. In terms of processing, proteolytically cleaved to generate 3 independent serine protease chains. The cleaved chains may remain attached to the membrane thanks to disulfide bonds. It is unclear whether cleavage always takes place.

The protein localises to the cell membrane. Its activity is regulated as follows. Inhibited by serine protease inhibitors PMSF and 4-(2-aminoethyl)benzenesulfonyl fluoride, but not by EDTA. In terms of biological role, serase-1 and serase-2 are serine proteases that hydrolyze the peptides N-t-Boc-Gln-Ala-Arg-AMC and N-t-Boc-Gln-Gly-Arg-AMC. In contrast, N-t-Boc-Ala-Phe-Lys-AMC and N-t-Boc-Ala-Pro-Ala-AMC are not significantly hydrolyzed. This chain is Transmembrane protease serine 9 (Tmprss9), found in Rattus norvegicus (Rat).